A 346-amino-acid polypeptide reads, in one-letter code: UPF0053 protein sll1254 (346 aa).

Transmembrane regions (helical) follow at residues 1 to 21 (MLEI…CSCA), 58 to 78 (IGTI…TIGA), 87 to 107 (AWMG…GEII), and 121 to 141 (LLIA…VWLI). Positions 1 to 179 (MLEIVAAIFI…YKEGVIEGDE (179 aa)) constitute a CNNM transmembrane domain. 2 CBS domains span residues 198–259 (MTPR…GYKT) and 263–320 (LARP…IVDE).

The protein belongs to the UPF0053 family.

The protein localises to the cell membrane. This Synechocystis sp. (strain ATCC 27184 / PCC 6803 / Kazusa) protein is UPF0053 protein sll1254.